We begin with the raw amino-acid sequence, 101 residues long: NADH-quinone oxidoreductase subunit K (101 aa).

3 consecutive transmembrane segments (helical) span residues 5–25, 29–49, and 62–82; these read LGQVLMLAGLLFVAGLVGVLL, LIMILIGVEIMLNAVGLVLVG, and VALLLMAVAAAEVTIALALVV.

This sequence belongs to the complex I subunit 4L family. As to quaternary structure, NDH-1 is composed of 14 different subunits. Subunits NuoA, H, J, K, L, M, N constitute the membrane sector of the complex.

Its subcellular location is the cell inner membrane. The catalysed reaction is a quinone + NADH + 5 H(+)(in) = a quinol + NAD(+) + 4 H(+)(out). NDH-1 shuttles electrons from NADH, via FMN and iron-sulfur (Fe-S) centers, to quinones in the respiratory chain. The immediate electron acceptor for the enzyme in this species is believed to be ubiquinone. Couples the redox reaction to proton translocation (for every two electrons transferred, four hydrogen ions are translocated across the cytoplasmic membrane), and thus conserves the redox energy in a proton gradient. The protein is NADH-quinone oxidoreductase subunit K of Syntrophotalea carbinolica (strain DSM 2380 / NBRC 103641 / GraBd1) (Pelobacter carbinolicus).